The primary structure comprises 1407 residues: DNA-directed RNA polymerase subunit beta' (1407 aa).

Zn(2+)-binding residues include cysteine 70, cysteine 72, cysteine 85, and cysteine 88. Positions 460, 462, and 464 each coordinate Mg(2+). The Zn(2+) site is built by cysteine 814, cysteine 888, cysteine 895, and cysteine 898. At lysine 972 the chain carries N6-acetyllysine.

The protein belongs to the RNA polymerase beta' chain family. As to quaternary structure, the RNAP catalytic core consists of 2 alpha, 1 beta, 1 beta' and 1 omega subunit. When a sigma factor is associated with the core the holoenzyme is formed, which can initiate transcription. It depends on Mg(2+) as a cofactor. The cofactor is Zn(2+).

The enzyme catalyses RNA(n) + a ribonucleoside 5'-triphosphate = RNA(n+1) + diphosphate. Its function is as follows. DNA-dependent RNA polymerase catalyzes the transcription of DNA into RNA using the four ribonucleoside triphosphates as substrates. The chain is DNA-directed RNA polymerase subunit beta' from Shigella flexneri serotype 5b (strain 8401).